A 138-amino-acid chain; its full sequence is Small ribosomal subunit protein uS11c (138 aa).

Positions methionine 1–arginine 23 are disordered. Positions glycine 9–arginine 23 are enriched in basic residues.

The protein belongs to the universal ribosomal protein uS11 family. In terms of assembly, part of the 30S ribosomal subunit.

It is found in the plastid. The protein resides in the chloroplast. The polypeptide is Small ribosomal subunit protein uS11c (Cucumis sativus (Cucumber)).